We begin with the raw amino-acid sequence, 565 residues long: NAD-dependent malic enzyme (565 aa).

Tyr104 (proton donor) is an active-site residue. Arg157 lines the NAD(+) pocket. Lys175 (proton acceptor) is an active-site residue. A divalent metal cation is bound by residues Glu246, Asp247, and Asp270. Residues Asp270 and Asn418 each coordinate NAD(+).

It belongs to the malic enzymes family. As to quaternary structure, homotetramer. Mg(2+) is required as a cofactor. The cofactor is Mn(2+).

It carries out the reaction (S)-malate + NAD(+) = pyruvate + CO2 + NADH. The enzyme catalyses oxaloacetate + H(+) = pyruvate + CO2. This is NAD-dependent malic enzyme from Salmonella heidelberg (strain SL476).